A 418-amino-acid chain; its full sequence is UDP-N-acetylglucosamine 1-carboxyvinyltransferase (418 aa).

22–23 (KN) is a binding site for phosphoenolpyruvate. UDP-N-acetyl-alpha-D-glucosamine is bound at residue Arg-93. Catalysis depends on Cys-117, which acts as the Proton donor. A 2-(S-cysteinyl)pyruvic acid O-phosphothioketal modification is found at Cys-117. Residues Asp-305 and Val-327 each contribute to the UDP-N-acetyl-alpha-D-glucosamine site.

Belongs to the EPSP synthase family. MurA subfamily.

The protein resides in the cytoplasm. The catalysed reaction is phosphoenolpyruvate + UDP-N-acetyl-alpha-D-glucosamine = UDP-N-acetyl-3-O-(1-carboxyvinyl)-alpha-D-glucosamine + phosphate. Its pathway is cell wall biogenesis; peptidoglycan biosynthesis. Its function is as follows. Cell wall formation. Adds enolpyruvyl to UDP-N-acetylglucosamine. This chain is UDP-N-acetylglucosamine 1-carboxyvinyltransferase, found in Halorhodospira halophila (strain DSM 244 / SL1) (Ectothiorhodospira halophila (strain DSM 244 / SL1)).